The chain runs to 347 residues: Phenylalanine--tRNA ligase alpha subunit (347 aa).

Residue Glu261 participates in Mg(2+) binding.

It belongs to the class-II aminoacyl-tRNA synthetase family. Phe-tRNA synthetase alpha subunit type 1 subfamily. Tetramer of two alpha and two beta subunits. The cofactor is Mg(2+).

Its subcellular location is the cytoplasm. It carries out the reaction tRNA(Phe) + L-phenylalanine + ATP = L-phenylalanyl-tRNA(Phe) + AMP + diphosphate + H(+). The sequence is that of Phenylalanine--tRNA ligase alpha subunit from Streptococcus equi subsp. equi (strain 4047).